The sequence spans 149 residues: D-aminoacyl-tRNA deacylase (149 aa).

The Gly-cisPro motif, important for rejection of L-amino acids signature appears at 137-138 (GP).

Belongs to the DTD family. In terms of assembly, homodimer.

It localises to the cytoplasm. It catalyses the reaction glycyl-tRNA(Ala) + H2O = tRNA(Ala) + glycine + H(+). The enzyme catalyses a D-aminoacyl-tRNA + H2O = a tRNA + a D-alpha-amino acid + H(+). Functionally, an aminoacyl-tRNA editing enzyme that deacylates mischarged D-aminoacyl-tRNAs. Also deacylates mischarged glycyl-tRNA(Ala), protecting cells against glycine mischarging by AlaRS. Acts via tRNA-based rather than protein-based catalysis; rejects L-amino acids rather than detecting D-amino acids in the active site. By recycling D-aminoacyl-tRNA to D-amino acids and free tRNA molecules, this enzyme counteracts the toxicity associated with the formation of D-aminoacyl-tRNA entities in vivo and helps enforce protein L-homochirality. The polypeptide is D-aminoacyl-tRNA deacylase (Caldicellulosiruptor bescii (strain ATCC BAA-1888 / DSM 6725 / KCTC 15123 / Z-1320) (Anaerocellum thermophilum)).